A 62-amino-acid chain; its full sequence is Potassium channel toxin alpha-KTx 6.21 (62 aa).

Residues 1–24 (MNAKLIYLLLVVTTMMLTFDTTQA) form the signal peptide. Intrachain disulfides connect C29-C50, C35-C55, C39-C57, and C45-C60. V61 carries the post-translational modification Valine amide.

The protein belongs to the short scorpion toxin superfamily. Potassium channel inhibitor family. Alpha-KTx 06 subfamily. Post-translationally, C-terminal amidation is important for activity. There is a 50-70-fold decrease in ability to inhibit Kv1.2/KCNA2 when the toxin is not amidated. This decrease may be explained by a 23-fold slower association rate (k(on)) together with a 2-fold faster dissociation rate (k(off)). Expressed by the venom gland.

It is found in the secreted. Functionally, reversible blocker of voltage-gated potassium channels with fast binding and unbinding kinetics. Has highest activity on human voltage-gated potassium channel Kv1.2/KCNA2 channels (IC(50)=0.11-0.16 nM), whereas its affinity for other channels tested was in the nanomolar range (hKv1.1/KCNA1, IC(50)=253 nM; hKv1.3/KCNA3, IC(50)=91 nM; and hKCa3.1/KCNN4, IC(50)=70 nM). The polypeptide is Potassium channel toxin alpha-KTx 6.21 (Urodacus yaschenkoi (Inland robust scorpion)).